We begin with the raw amino-acid sequence, 156 residues long: Transcription elongation factor GreA (156 aa).

Positions 1 to 32 form a coiled coil; the sequence is MKKVRLTREGYEKLKKELEDLKRKFMYEISER.

This sequence belongs to the GreA/GreB family.

In terms of biological role, necessary for efficient RNA polymerase transcription elongation past template-encoded arresting sites. The arresting sites in DNA have the property of trapping a certain fraction of elongating RNA polymerases that pass through, resulting in locked ternary complexes. Cleavage of the nascent transcript by cleavage factors such as GreA or GreB allows the resumption of elongation from the new 3'terminus. GreA releases sequences of 2 to 3 nucleotides. The sequence is that of Transcription elongation factor GreA from Thermotoga maritima (strain ATCC 43589 / DSM 3109 / JCM 10099 / NBRC 100826 / MSB8).